Consider the following 200-residue polypeptide: Max dimerization protein 3 (200 aa).

Disordered stretches follow at residues 31–56 (SILP…DNVR) and 133–164 (RLLP…QEDL). Positions 54–106 (NVRSVHNELEKHRRAQLRRCLEQLKQQVPLSMENSRHTTLSLLHRAKQHIKKL) constitute a bHLH domain.

As to quaternary structure, efficient DNA binding requires dimerization with another bHLH protein. Binds DNA as a heterodimer with MAX. Expressed broadly throughout the CNS and the eye, starting at neurula stages.

The protein localises to the nucleus. Transcriptional repressor. Binds with MAX to form a sequence-specific DNA-binding protein complex which recognizes the core sequence 5'-CAC[GA]TG-3'. This Xenopus laevis (African clawed frog) protein is Max dimerization protein 3 (mxd3).